The primary structure comprises 456 residues: RUN domain-containing protein 3B (456 aa).

Residues 1–24 (MASRSLGGLSGIRGGGGGGGKKSL) form a disordered region. Residues 8 to 21 (GLSGIRGGGGGGGK) show a composition bias toward gly residues. The residue at position 13 (Arg-13) is an Omega-N-methylarginine. The 133-residue stretch at 57–189 (DDSSPEFNNF…IDFSFCLKGE (133 aa)) folds into the RUN domain. Residues Ser-215 and Ser-216 each carry the phosphoserine modification. The disordered stretch occupies residues 216–237 (SDEEELRTLGSSGSESSTPENV). Over residues 224 to 235 (LGSSGSESSTPE) the composition is skewed to polar residues. Residues 300 to 325 (AHKLEKEQLEYIIVELQDQLTVLKNN) adopt a coiled-coil conformation. The span at 382 to 405 (SLSQTSLDPGQSQEGDGKQDTLNV) shows a compositional bias: polar residues. Residues 382-411 (SLSQTSLDPGQSQEGDGKQDTLNVMSEGKE) are disordered.

It belongs to the RUNDC3 family. In terms of assembly, interacts with RAP2A.

The sequence is that of RUN domain-containing protein 3B (RUNDC3B) from Pongo abelii (Sumatran orangutan).